A 380-amino-acid polypeptide reads, in one-letter code: MEPPVQIFRGEPGPTCSPSTCLPPNGSGWFPGWAEPDGNGSAGSEDVLLEPAHISPVILVIITAVYSVVFVVGLVGNSLVMFVIIRYTKMKTATNIYIFNLALADALVTTTMPFQSTVYLMNSWPFGDVLCKVVISIDYYNMFTSIFTLTMMSVDRYIAVCHPVKALDFRTPLKAKIINICIWILSSSVGISAIVLGGTKVREDMEVIECSLQFPDDDYSWWDLFMKVCVFVFAFVIPVLIIIVCYTLMILRLKSVRLLSGSREKDRNLRRITRLVLVVVAVFVVCWTPIHIFILVEALGSTAHSTAALSSYYFCIALGYTNSSLNPILYAFLDENFKRCFRDFCFPIKMRMERQSTSRVRNTVQDPAYVREVDGVNKPV.

Over 1–57 (MEPPVQIFRGEPGPTCSPSTCLPPNGSGWFPGWAEPDGNGSAGSEDVLLEPAHISPV) the chain is Extracellular. 2 N-linked (GlcNAc...) asparagine glycosylation sites follow: asparagine 25 and asparagine 39. Residues 58–85 (ILVIITAVYSVVFVVGLVGNSLVMFVII) form a helical membrane-spanning segment. The Cytoplasmic portion of the chain corresponds to 86–95 (RYTKMKTATN). A helical membrane pass occupies residues 96–119 (IYIFNLALADALVTTTMPFQSTVY). At 120–132 (LMNSWPFGDVLCK) the chain is on the extracellular side. Cysteine 131 and cysteine 210 are disulfide-bonded. A helical transmembrane segment spans residues 133–154 (VVISIDYYNMFTSIFTLTMMSV). Over 155 to 173 (DRYIAVCHPVKALDFRTPL) the chain is Cytoplasmic. A helical transmembrane segment spans residues 174–196 (KAKIINICIWILSSSVGISAIVL). The Extracellular portion of the chain corresponds to 197–222 (GGTKVREDMEVIECSLQFPDDDYSWW). A helical transmembrane segment spans residues 223-247 (DLFMKVCVFVFAFVIPVLIIIVCYT). Over 248–274 (LMILRLKSVRLLSGSREKDRNLRRITR) the chain is Cytoplasmic. The chain crosses the membrane as a helical span at residues 275-296 (LVLVVVAVFVVCWTPIHIFILV). Residues 297–311 (EALGSTAHSTAALSS) lie on the Extracellular side of the membrane. A helical membrane pass occupies residues 312 to 333 (YYFCIALGYTNSSLNPILYAFL). Residues 334-380 (DENFKRCFRDFCFPIKMRMERQSTSRVRNTVQDPAYVREVDGVNKPV) lie on the Cytoplasmic side of the membrane. Cysteine 345 is lipidated: S-palmitoyl cysteine.

This sequence belongs to the G-protein coupled receptor 1 family. In terms of assembly, interacts with NHERF1. Interacts with GABARAPL1.

It is found in the cell membrane. Functionally, G-protein coupled opioid receptor that functions as a receptor for endogenous alpha-neoendorphins and dynorphins, but has low affinity for beta-endorphins. Also functions as a receptor for various synthetic opioids and for the psychoactive diterpene salvinorin A. Ligand binding causes a conformation change that triggers signaling via guanine nucleotide-binding proteins (G proteins) and modulates the activity of down-stream effectors, such as adenylate cyclase. Signaling leads to the inhibition of adenylate cyclase activity. Inhibits neurotransmitter release by reducing calcium ion currents and increasing potassium ion conductance. Plays a role in the perception of pain. Plays a role in mediating reduced physical activity upon treatment with synthetic opioids. Plays a role in the regulation of salivation in response to synthetic opioids. May play a role in arousal and regulation of autonomic and neuroendocrine functions. The chain is Kappa-type opioid receptor (OPRK1) from Bos taurus (Bovine).